Reading from the N-terminus, the 378-residue chain is Chaperone protein DnaJ (378 aa).

The region spanning 3 to 67 (DFYDTLGVNR…EKRARYDQFG (65 aa)) is the J domain. The segment at 132–214 (GQEREIKIPH…CGGQGVKQVR (83 aa)) adopts a CR-type zinc-finger fold. The Zn(2+) site is built by C145, C148, C162, C165, C188, C191, C202, and C205. CXXCXGXG motif repeat units lie at residues 145-152 (CDVCRGTG), 162-169 (CSTCGGAG), 188-195 (CPTCSGSG), and 202-209 (CQSCGGQG).

This sequence belongs to the DnaJ family. In terms of assembly, homodimer. Zn(2+) is required as a cofactor.

It localises to the cytoplasm. Functionally, participates actively in the response to hyperosmotic and heat shock by preventing the aggregation of stress-denatured proteins and by disaggregating proteins, also in an autonomous, DnaK-independent fashion. Unfolded proteins bind initially to DnaJ; upon interaction with the DnaJ-bound protein, DnaK hydrolyzes its bound ATP, resulting in the formation of a stable complex. GrpE releases ADP from DnaK; ATP binding to DnaK triggers the release of the substrate protein, thus completing the reaction cycle. Several rounds of ATP-dependent interactions between DnaJ, DnaK and GrpE are required for fully efficient folding. Also involved, together with DnaK and GrpE, in the DNA replication of plasmids through activation of initiation proteins. The chain is Chaperone protein DnaJ from Prochlorococcus marinus (strain SARG / CCMP1375 / SS120).